The sequence spans 655 residues: Probable alpha-galactosidase D (655 aa).

The N-terminal stretch at 1–16 (MASVIALSLLLPAAFA) is a signal peptide. 2 N-linked (GlcNAc...) asparagine glycosylation sites follow: Asn-87 and Asn-93. An intrachain disulfide couples Cys-126 to Cys-153. The Nucleophile role is filled by Asp-151. 196-200 (EWGID) contributes to the substrate binding site. Residue Asp-218 is the Proton donor of the active site. N-linked (GlcNAc...) asparagine glycosylation is found at Asn-432, Asn-482, Asn-502, Asn-540, and Asn-579.

Belongs to the glycosyl hydrolase 27 family.

The protein localises to the secreted. The catalysed reaction is Hydrolysis of terminal, non-reducing alpha-D-galactose residues in alpha-D-galactosides, including galactose oligosaccharides, galactomannans and galactolipids.. Hydrolyzes a variety of simple alpha-D-galactoside as well as more complex molecules such as oligosaccharides and polysaccharides. The protein is Probable alpha-galactosidase D (aglD) of Aspergillus terreus (strain NIH 2624 / FGSC A1156).